The sequence spans 343 residues: Beta-ketoacyl-[acyl-carrier-protein] synthase III 1 (343 aa).

Residues Cys-122 and His-268 contribute to the active site. Positions 269–273 (QANVR) are ACP-binding. Asn-299 is a catalytic residue.

This sequence belongs to the thiolase-like superfamily. FabH family. As to quaternary structure, homodimer.

It is found in the cytoplasm. It carries out the reaction malonyl-[ACP] + acetyl-CoA + H(+) = 3-oxobutanoyl-[ACP] + CO2 + CoA. It functions in the pathway lipid metabolism; fatty acid biosynthesis. Functionally, essential enzyme that catalyzes the condensation reaction of fatty acid synthesis by the addition to an acyl acceptor of two carbons from malonyl-ACP. Catalyzes the first condensation reaction which initiates fatty acid synthesis and may therefore play a role in governing the total rate of fatty acid production. Possesses both acetoacetyl-ACP synthase and acetyl transacylase activities. Its substrate specificity determines the biosynthesis of branched-chain of fatty acids. This Streptomyces coelicolor (strain ATCC BAA-471 / A3(2) / M145) protein is Beta-ketoacyl-[acyl-carrier-protein] synthase III 1.